The primary structure comprises 1657 residues: Androglobin (1657 aa).

A compositionally biased stretch (basic residues) spans 1–11; the sequence is MASKQAKRKEV. Disordered stretches follow at residues 1-40 and 321-398; these read MASKQAKRKEVHRINSAHGSDKSKDLYHFGSNVPPGSFEQ and TKEN…SSDV. The region spanning 70 to 402 is the Calpain catalytic domain; it reads KDKTAKSPIF…RPSSDVQYSM (333 aa). The span at 321–386 shows a compositional bias: basic and acidic residues; sequence TKENKDGKDG…DGEKEKEKFK (66 aa). Positions 762–889 constitute a Globin; C-terminal part domain; that stretch reads HVCSMTTFVI…EDVSLAEWVD (128 aa). Heme b-binding residues include Gln791 and His823. The 30-residue stretch at 905-934 folds into the IQ domain; that stretch reads EIAAAVKIQSMWKGCYVRLLMKARKPETKE. The region spanning 935–967 is the Globin; N-terminal part domain; it reads NVTVADTLQKIWAVLEMNLEQYALSLLRLMFKS. Disordered stretches follow at residues 1184–1226, 1288–1356, 1422–1459, and 1638–1657; these read SKQV…TDTG, KHEE…QEDP, TTDTTTSAPSPETLSVSQSQTKSSEEGELDTGKYADIK, and IEKKSPASDSQKKKKVGKKK. The segment covering 1321–1336 has biased composition (basic and acidic residues); sequence EKSAEKEKLAKEKQAP. Polar residues-rich tracts occupy residues 1341–1351 and 1422–1443; these read QQVQMPTAVHS and TTDTTTSAPSPETLSVSQSQTK. Residues 1585 to 1640 are a coiled coil; the sequence is DEVLEMYGEMRDSVDEARQKILDIREVYRNKLLEAERLRMEALAAQEAAVKIEIEK.

In the central section; belongs to the globin family. This sequence in the N-terminal section; belongs to the peptidase C2 family. In terms of assembly, interacts with septin SEPT10; contributes to in vitro proteolytic cleavage of SEPT10 in a calmodulin-dependent manner. Interacts with CFAP69. Interacts with SPEF2. May interact with calmodulin. In terms of tissue distribution, strongly expressed in testis and lung. Weakly expressed in heart, brain, spleen, kidney and tongue.

It is found in the cell projection. Its subcellular location is the cilium. The protein resides in the flagellum. Functionally, probable chimeric globin with a bis-histidyl six-coordinate heme-iron atom through which it could bind dioxygen, carbon monoxide and nitric oxide. Required for sperm flagellum formation and maturation of elongating spermatids, thus playing an essential role in male fertility. This chain is Androglobin, found in Mus musculus (Mouse).